We begin with the raw amino-acid sequence, 669 residues long: DNA ligase (669 aa).

Residues 34–38 (DAEYD), 83–84 (SL), and Glu-114 contribute to the NAD(+) site. Lys-116 acts as the N6-AMP-lysine intermediate in catalysis. 4 residues coordinate NAD(+): Arg-137, Glu-171, Lys-287, and Lys-311. Cys-405, Cys-408, Cys-423, and Cys-428 together coordinate Zn(2+). The BRCT domain occupies 591–669 (NVESYFAGKT…EERFLQELNK (79 aa)).

It belongs to the NAD-dependent DNA ligase family. LigA subfamily. Mg(2+) is required as a cofactor. Mn(2+) serves as cofactor.

The enzyme catalyses NAD(+) + (deoxyribonucleotide)n-3'-hydroxyl + 5'-phospho-(deoxyribonucleotide)m = (deoxyribonucleotide)n+m + AMP + beta-nicotinamide D-nucleotide.. In terms of biological role, DNA ligase that catalyzes the formation of phosphodiester linkages between 5'-phosphoryl and 3'-hydroxyl groups in double-stranded DNA using NAD as a coenzyme and as the energy source for the reaction. It is essential for DNA replication and repair of damaged DNA. This is DNA ligase from Bacillus cereus (strain AH820).